The chain runs to 456 residues: SWI/SNF complex component SNF12 homolog (456 aa).

Residues 234–310 (HVPQKYKVLG…PQLLREHLSP (77 aa)) form the SWIB/MDM2 domain. The disordered stretch occupies residues 435 to 456 (KQTTPNPTPQQISMAPSTPQTP).

It belongs to the SMARCD family. In terms of assembly, part of a SWI-SNF complex.

Its subcellular location is the nucleus. Its function is as follows. Involved in transcriptional activation and repression of select genes by chromatin remodeling (alteration of DNA-nucleosome topology). This chain is SWI/SNF complex component SNF12 homolog (snf12-1), found in Dictyostelium discoideum (Social amoeba).